Reading from the N-terminus, the 517-residue chain is Crotonobetaine/carnitine--CoA ligase (517 aa).

Belongs to the ATP-dependent AMP-binding enzyme family.

The catalysed reaction is 4-(trimethylamino)butanoate + ATP + CoA = 4-(trimethylamino)butanoyl-CoA + AMP + diphosphate. It catalyses the reaction crotonobetaine + ATP + CoA = crotonobetainyl-CoA + AMP + diphosphate. The enzyme catalyses (R)-carnitine + ATP + CoA = (R)-carnitinyl-CoA + AMP + diphosphate. The protein operates within amine and polyamine metabolism; carnitine metabolism. Functionally, catalyzes the transfer of CoA to carnitine, generating the initial carnitinyl-CoA needed for the CaiB reaction cycle. Also has activity toward crotonobetaine and gamma-butyrobetaine. This is Crotonobetaine/carnitine--CoA ligase from Citrobacter koseri (strain ATCC BAA-895 / CDC 4225-83 / SGSC4696).